The primary structure comprises 347 residues: tRNA N6-adenosine threonylcarbamoyltransferase (347 aa).

Residues His117 and His121 each coordinate Fe cation. Substrate is bound by residues 140–144 (LVSGG), Asp174, Gly187, Asp191, and Asn281. Asp309 serves as a coordination point for Fe cation.

This sequence belongs to the KAE1 / TsaD family. Requires Fe(2+) as cofactor.

The protein localises to the cytoplasm. The enzyme catalyses L-threonylcarbamoyladenylate + adenosine(37) in tRNA = N(6)-L-threonylcarbamoyladenosine(37) in tRNA + AMP + H(+). Functionally, required for the formation of a threonylcarbamoyl group on adenosine at position 37 (t(6)A37) in tRNAs that read codons beginning with adenine. Is involved in the transfer of the threonylcarbamoyl moiety of threonylcarbamoyl-AMP (TC-AMP) to the N6 group of A37, together with TsaE and TsaB. TsaD likely plays a direct catalytic role in this reaction. This chain is tRNA N6-adenosine threonylcarbamoyltransferase, found in Thermobifida fusca (strain YX).